We begin with the raw amino-acid sequence, 179 residues long: Large ribosomal subunit protein uL5 (179 aa).

The protein belongs to the universal ribosomal protein uL5 family. Part of the 50S ribosomal subunit; part of the 5S rRNA/L5/L18/L25 subcomplex. Contacts the 5S rRNA and the P site tRNA. Forms a bridge to the 30S subunit in the 70S ribosome.

This is one of the proteins that bind and probably mediate the attachment of the 5S RNA into the large ribosomal subunit, where it forms part of the central protuberance. In the 70S ribosome it contacts protein S13 of the 30S subunit (bridge B1b), connecting the 2 subunits; this bridge is implicated in subunit movement. Contacts the P site tRNA; the 5S rRNA and some of its associated proteins might help stabilize positioning of ribosome-bound tRNAs. The polypeptide is Large ribosomal subunit protein uL5 (Burkholderia vietnamiensis (strain G4 / LMG 22486) (Burkholderia cepacia (strain R1808))).